A 109-amino-acid polypeptide reads, in one-letter code: Small ribosomal subunit protein bS16 (109 aa).

Residues 87–109 (ALRETPKKSAPKAKAQERAKAAG) form a disordered region. Basic and acidic residues predominate over residues 100–109 (KAQERAKAAG).

This sequence belongs to the bacterial ribosomal protein bS16 family.

The protein is Small ribosomal subunit protein bS16 of Rhodospirillum centenum (strain ATCC 51521 / SW).